Here is a 343-residue protein sequence, read N- to C-terminus: Heat-inducible transcription repressor HrcA (343 aa).

This sequence belongs to the HrcA family.

Functionally, negative regulator of class I heat shock genes (grpE-dnaK-dnaJ and groELS operons). Prevents heat-shock induction of these operons. This Thermobifida fusca (strain YX) protein is Heat-inducible transcription repressor HrcA.